The primary structure comprises 852 residues: Protein mono-ADP-ribosyltransferase PARP8 (852 aa).

Disordered regions lie at residues 113 to 134 and 289 to 310; these read NGEESRQNSTVEEDSEGDNDSE and SPSYPPPGCGKSKSKLKPEQDG. Over residues 123–134 the composition is skewed to acidic residues; sequence VEEDSEGDNDSE. Cys-332, Cys-366, Cys-375, and Cys-394 each carry ADP-ribosylcysteine. Positions 615-842 constitute a PARP catalytic domain; sequence EMTQAPYLEI…QEGGIHKEIL (228 aa). The tract at residues 748-775 is disordered; it reads QKVSSKDEPASSSKSSNASQSQKKGQQS. Positions 757–775 are enriched in low complexity; that stretch reads ASSSKSSNASQSQKKGQQS.

Belongs to the ARTD/PARP family. Post-translationally, auto-mono-ADP-ribosylated.

The enzyme catalyses L-cysteinyl-[protein] + NAD(+) = S-(ADP-D-ribosyl)-L-cysteinyl-[protein] + nicotinamide + H(+). In terms of biological role, mono-ADP-ribosyltransferase that mediates mono-ADP-ribosylation of target proteins. This is Protein mono-ADP-ribosyltransferase PARP8 from Mus musculus (Mouse).